A 360-amino-acid chain; its full sequence is S-adenosylmethionine:tRNA ribosyltransferase-isomerase (360 aa).

The protein belongs to the QueA family. In terms of assembly, monomer.

Its subcellular location is the cytoplasm. It carries out the reaction 7-aminomethyl-7-carbaguanosine(34) in tRNA + S-adenosyl-L-methionine = epoxyqueuosine(34) in tRNA + adenine + L-methionine + 2 H(+). It participates in tRNA modification; tRNA-queuosine biosynthesis. Functionally, transfers and isomerizes the ribose moiety from AdoMet to the 7-aminomethyl group of 7-deazaguanine (preQ1-tRNA) to give epoxyqueuosine (oQ-tRNA). The sequence is that of S-adenosylmethionine:tRNA ribosyltransferase-isomerase from Burkholderia pseudomallei (strain 1106a).